The sequence spans 95 residues: MLKPLGDRVVVQLKEEKEQTVGGFVLAGASQEKTKKAQVVAVGEGVRTLTGELVASSLVQGDTILIENHVGTPVKDDGKDCLIIREADVLAVVND.

This sequence belongs to the GroES chaperonin family. As to quaternary structure, heptamer of 7 subunits arranged in a ring. Interacts with the chaperonin GroEL.

It localises to the cytoplasm. Functionally, together with the chaperonin GroEL, plays an essential role in assisting protein folding. The GroEL-GroES system forms a nano-cage that allows encapsulation of the non-native substrate proteins and provides a physical environment optimized to promote and accelerate protein folding. GroES binds to the apical surface of the GroEL ring, thereby capping the opening of the GroEL channel. This chain is Co-chaperonin GroES, found in Streptococcus mutans serotype c (strain ATCC 700610 / UA159).